We begin with the raw amino-acid sequence, 247 residues long: ATP synthase subunit a, chloroplastic (247 aa).

The next 5 helical transmembrane spans lie at 38–58 (QVLI…IIAV), 95–115 (VPFI…GALL), 134–154 (INTT…AGLT), 199–219 (LVVV…VMFL), and 220–240 (GLFT…AYIG).

This sequence belongs to the ATPase A chain family. As to quaternary structure, F-type ATPases have 2 components, CF(1) - the catalytic core - and CF(0) - the membrane proton channel. CF(1) has five subunits: alpha(3), beta(3), gamma(1), delta(1), epsilon(1). CF(0) has four main subunits: a, b, b' and c.

Its subcellular location is the plastid. The protein resides in the chloroplast thylakoid membrane. In terms of biological role, key component of the proton channel; it plays a direct role in the translocation of protons across the membrane. The sequence is that of ATP synthase subunit a, chloroplastic from Carica papaya (Papaya).